We begin with the raw amino-acid sequence, 565 residues long: Sulfite reductase [NADPH] hemoprotein beta-component (565 aa).

[4Fe-4S] cluster-binding residues include C429, C435, C474, and C478. Residue C478 participates in siroheme binding.

It belongs to the nitrite and sulfite reductase 4Fe-4S domain family. Alpha(8)-beta(8). The alpha component is a flavoprotein, the beta component is a hemoprotein. The cofactor is siroheme. It depends on [4Fe-4S] cluster as a cofactor.

It carries out the reaction hydrogen sulfide + 3 NADP(+) + 3 H2O = sulfite + 3 NADPH + 4 H(+). It functions in the pathway sulfur metabolism; hydrogen sulfide biosynthesis; hydrogen sulfide from sulfite (NADPH route): step 1/1. In terms of biological role, component of the sulfite reductase complex that catalyzes the 6-electron reduction of sulfite to sulfide. This is one of several activities required for the biosynthesis of L-cysteine from sulfate. The sequence is that of Sulfite reductase [NADPH] hemoprotein beta-component from Shewanella sp. (strain MR-7).